The following is a 155-amino-acid chain: MRLRLIAVGSRMPRWVEEGWHEYARRLPPELALELLEIPLHTRSKNADVARLIRQEGEAMLGKVQPGERIVTLEVAGKSWSTEQLAAELERWRLDARTVNLMVGGPEGLAPEVCARSEQRWSLSPLTLPHPLVRILIGEQLYRAWTLLSGHPYHK.

S-adenosyl-L-methionine contacts are provided by residues Leu73, Gly104, and 123–128 (LSPLTL).

The protein belongs to the RNA methyltransferase RlmH family. Homodimer.

The protein resides in the cytoplasm. The enzyme catalyses pseudouridine(1915) in 23S rRNA + S-adenosyl-L-methionine = N(3)-methylpseudouridine(1915) in 23S rRNA + S-adenosyl-L-homocysteine + H(+). Functionally, specifically methylates the pseudouridine at position 1915 (m3Psi1915) in 23S rRNA. In Azotobacter vinelandii (strain DJ / ATCC BAA-1303), this protein is Ribosomal RNA large subunit methyltransferase H.